A 529-amino-acid polypeptide reads, in one-letter code: Retinoic acid-induced protein 2 (529 aa).

Disordered regions lie at residues 1–21 (MDDL…PTLA) and 400–419 (SHSS…HPGS). Residues 407 to 416 (GTEMVSQPSH) show a composition bias toward polar residues.

The sequence is that of Retinoic acid-induced protein 2 (Rai2) from Mus musculus (Mouse).